Reading from the N-terminus, the 630-residue chain is ATP-dependent zinc metalloprotease FtsH 2 (630 aa).

Residues 1–8 (MNNNPNRR) are Cytoplasmic-facing. A helical transmembrane segment spans residues 9 to 29 (GSLIGPLFIYFILAMLIFMSI). Topologically, residues 30–110 (SQLNTSNITE…YIQNTGASWW (81 aa)) are periplasmic. The helical transmembrane segment at 111-131 (VTMLIYMLPLIILMFFWFWMF) threads the bilayer. Residues 132-630 (RRSGTGEGIP…KETNLFVSYA (499 aa)) are Cytoplasmic-facing. 203–210 (GPPGTGKT) is a binding site for ATP. His425 is a binding site for Zn(2+). Glu426 is an active-site residue. The Zn(2+) site is built by His429 and Asp502.

This sequence in the central section; belongs to the AAA ATPase family. The protein in the C-terminal section; belongs to the peptidase M41 family. Homohexamer. Requires Zn(2+) as cofactor.

It localises to the cell inner membrane. Functionally, acts as a processive, ATP-dependent zinc metallopeptidase for both cytoplasmic and membrane proteins. Plays a role in the quality control of integral membrane proteins. This Petrotoga mobilis (strain DSM 10674 / SJ95) protein is ATP-dependent zinc metalloprotease FtsH 2.